The sequence spans 1074 residues: Probable arabinosyltransferase C (1074 aa).

10 helical membrane passes run 15–37 (ARLV…PLLP), 214–236 (LLKL…ALHV), 251–273 (SRWW…WHFV), 415–437 (IIIG…ALLV), 452–474 (RFGY…FLIF), 516–538 (SVAR…AMTL), 573–595 (THQF…VAVT), 608–630 (FGAA…WYVS), 645–667 (FGFT…WFHF), and 684–706 (LLVA…SLTL).

This sequence belongs to the emb family.

The protein resides in the cell membrane. In terms of biological role, arabinosyl transferase responsible for the polymerization of arabinose into the arabinan of arabinogalactan. This chain is Probable arabinosyltransferase C (embC), found in Mycolicibacterium smegmatis (Mycobacterium smegmatis).